We begin with the raw amino-acid sequence, 444 residues long: UDP-N-acetylmuramate--L-alanine ligase (444 aa).

G111 to S117 is an ATP binding site.

The protein belongs to the MurCDEF family.

The protein localises to the cytoplasm. The enzyme catalyses UDP-N-acetyl-alpha-D-muramate + L-alanine + ATP = UDP-N-acetyl-alpha-D-muramoyl-L-alanine + ADP + phosphate + H(+). It participates in cell wall biogenesis; peptidoglycan biosynthesis. Cell wall formation. In Leuconostoc citreum (strain KM20), this protein is UDP-N-acetylmuramate--L-alanine ligase.